Consider the following 872-residue polypeptide: DNA mismatch repair protein MutS (872 aa).

623–630 lines the ATP pocket; that stretch reads GPNMAGKS.

This sequence belongs to the DNA mismatch repair MutS family.

This protein is involved in the repair of mismatches in DNA. It is possible that it carries out the mismatch recognition step. This protein has a weak ATPase activity. The chain is DNA mismatch repair protein MutS from Trichlorobacter lovleyi (strain ATCC BAA-1151 / DSM 17278 / SZ) (Geobacter lovleyi).